The following is a 112-amino-acid chain: Virion protein 6 (112 aa).

Its subcellular location is the virion. This is Virion protein 6 from Enterococcus phage phiEF24C (Enterococcus bacteriophage phi-EF24C).